Reading from the N-terminus, the 553-residue chain is ATP synthase F(1) complex subunit alpha, mitochondrial (553 aa).

The N-terminal 43 residues, M1–L43, are a transit peptide targeting the mitochondrion. Phosphoserine occurs at positions 53 and 65. The residue at position 76 (S76) is a Phosphoserine; alternate. Residue S76 is glycosylated (O-linked (GlcNAc) serine; alternate). Phosphoserine is present on S106. Residues K123, K126, and K132 each carry the N6-acetyllysine modification. Position 134 is a phosphothreonine (T134). K161 carries the post-translational modification N6-acetyllysine; alternate. K161 carries the N6-succinyllysine; alternate modification. A Phosphoserine modification is found at S166. Position 167 is an N6-acetyllysine; alternate (K167). Residue K167 is modified to N6-succinyllysine; alternate. A Phosphoserine modification is found at S184. R204 is modified (omega-N-methylarginine). The ATP site is built by Q215, G217, K218, T219, and S220. T219 contributes to the Mg(2+) binding site. N6-acetyllysine; alternate is present on residues K230 and K239. K230 and K239 each carry N6-succinyllysine; alternate. K240 carries the N6-acetyllysine modification. 2 positions are modified to N6-acetyllysine; alternate: K261 and K305. N6-succinyllysine; alternate is present on residues K261 and K305. Mg(2+) is bound at residue D312. An N6-acetyllysine; alternate modification is found at K427. The residue at position 427 (K427) is an N6-succinyllysine; alternate. N6-acetyllysine is present on K434. Residues Q473 and Q475 each contribute to the ATP site. N6-acetyllysine; alternate is present on residues K498, K506, K531, and K539. Residues K498, K506, K531, and K539 each carry the N6-succinyllysine; alternate modification. K541 carries the post-translational modification N6-acetyllysine.

This sequence belongs to the ATPase alpha/beta chains family. Homotrimer. Component of the ATP synthase complex composed at least of ATP5F1A/subunit alpha, ATP5F1B/subunit beta, ATP5MC1/subunit c (homooctomer), MT-ATP6/subunit a, MT-ATP8/subunit 8, ATP5ME/subunit e, ATP5MF/subunit f, ATP5MG/subunit g, ATP5MK/subunit k, ATP5MJ/subunit j, ATP5F1C/subunit gamma, ATP5F1D/subunit delta, ATP5F1E/subunit epsilon, ATP5PF/subunit F6, ATP5PB/subunit b, ATP5PD/subunit d, ATP5PO/subunit OSCP. ATP synthase complex consists of a soluble F(1) head domain (subunits alpha(3) and beta(3)) - the catalytic core - and a membrane F(0) domain - the membrane proton channel (subunits c, a, 8, e, f, g, k and j). These two domains are linked by a central stalk (subunits gamma, delta, and epsilon) rotating inside the F1 region and a stationary peripheral stalk (subunits F6, b, d, and OSCP). Interacts with ATPAF2. Interacts with HRG; the interaction occurs on the surface of T-cells and alters the cell morphology when associated with concanavalin (in vitro). Interacts with PLG (angiostatin peptide); the interaction inhibits most of the angiogenic properties of angiostatin. Interacts with BLOC1S1. Interacts with BCL2L1 isoform BCL-X(L); the interaction mediates the association of BCL2L1 isoform BCL-X(L) with the mitochondrial membrane F(1)F(0) ATP synthase and enhances neurons metabolic efficiency. Interacts with CLN5 and PPT1. Interacts with S100A1; this interaction increases F1-ATPase activity. Interacts with ABCB7; this interaction allows the regulation of cellular iron homeostasis and cellular reactive oxygen species (ROS) levels in cardiomyocytes. In terms of processing, acetylated on lysine residues. BLOC1S1 is required for acetylation.

The protein resides in the mitochondrion inner membrane. The protein localises to the cell membrane. Functionally, subunit alpha, of the mitochondrial membrane ATP synthase complex (F(1)F(0) ATP synthase or Complex V) that produces ATP from ADP in the presence of a proton gradient across the membrane which is generated by electron transport complexes of the respiratory chain. ATP synthase complex consist of a soluble F(1) head domain - the catalytic core - and a membrane F(1) domain - the membrane proton channel. These two domains are linked by a central stalk rotating inside the F(1) region and a stationary peripheral stalk. During catalysis, ATP synthesis in the catalytic domain of F(1) is coupled via a rotary mechanism of the central stalk subunits to proton translocation. In vivo, can only synthesize ATP although its ATP hydrolase activity can be activated artificially in vitro. With the catalytic subunit beta (ATP5F1B), forms the catalytic core in the F(1) domain. Subunit alpha does not bear the catalytic high-affinity ATP-binding sites. In Pan troglodytes (Chimpanzee), this protein is ATP synthase F(1) complex subunit alpha, mitochondrial.